A 510-amino-acid polypeptide reads, in one-letter code: Portal protein (510 aa).

The protein belongs to the podoviridae head-to-tail connector protein family. As to quaternary structure, homododecamer.

Its subcellular location is the virion. In terms of biological role, forms the portal vertex of the capsid. This portal plays critical roles in head assembly, genome packaging, neck/tail attachment, and genome ejection. The portal protein multimerizes as a single ring-shaped homododecamer arranged around a central channel. This chain is Portal protein, found in Pseudomonas phage phiKMV.